We begin with the raw amino-acid sequence, 364 residues long: 3-methyl-2-oxobutanoate hydroxymethyltransferase 1, mitochondrial (364 aa).

Residues 1-59 (MMMMMRRAFRHLARQQRRPLSHVPESAVYGGPRPQDVGAAAGAGAGAGATRRVTVTTLR) constitute a mitochondrion transit peptide. The Mg(2+) site is built by Asp94 and Asp133. Residues 94–95 (DS), Asp133, and Lys163 each bind 3-methyl-2-oxobutanoate. Position 165 (Glu165) interacts with Mg(2+). The Proton acceptor role is filled by Glu233.

This sequence belongs to the PanB family. The cofactor is Mg(2+).

The protein resides in the mitochondrion. The enzyme catalyses 3-methyl-2-oxobutanoate + (6R)-5,10-methylene-5,6,7,8-tetrahydrofolate + H2O = 2-dehydropantoate + (6S)-5,6,7,8-tetrahydrofolate. It functions in the pathway cofactor biosynthesis; (R)-pantothenate biosynthesis; (R)-pantoate from 3-methyl-2-oxobutanoate: step 1/2. Its function is as follows. Catalyzes the reversible reaction in which hydroxymethyl group from 5,10-methylenetetrahydrofolate is transferred onto alpha-ketoisovalerate to form ketopantoate. This Oryza sativa subsp. japonica (Rice) protein is 3-methyl-2-oxobutanoate hydroxymethyltransferase 1, mitochondrial (KPHMT1).